The chain runs to 56 residues: Putative 2-Cys peroxiredoxin BAS1 (56 aa).

This sequence belongs to the peroxiredoxin family. AhpC/Prx1 subfamily. In terms of assembly, homodimer; disulfide-linked, upon oxidation.

The protein localises to the plastid. It localises to the chloroplast. The enzyme catalyses a hydroperoxide + [thioredoxin]-dithiol = an alcohol + [thioredoxin]-disulfide + H2O. Functionally, thiol-specific peroxidase that catalyzes the reduction of hydrogen peroxide and organic hydroperoxides to water and alcohols, respectively. Plays a role in cell protection against oxidative stress by detoxifying peroxides. May be an antioxidant enzyme particularly in the developing shoot and photosynthesizing leaf. This chain is Putative 2-Cys peroxiredoxin BAS1, found in Pinus strobus (Eastern white pine).